The following is a 314-amino-acid chain: Malate dehydrogenase (314 aa).

NAD(+) is bound by residues 11-16 and Asp-35; that span reads GSGNIG. Residues Arg-84 and Arg-90 each contribute to the substrate site. Residues Asn-97 and 120-122 contribute to the NAD(+) site; that span reads ITN. Positions 122 and 153 each coordinate substrate. The Proton acceptor role is filled by His-177.

It belongs to the LDH/MDH superfamily. MDH type 3 family.

It catalyses the reaction (S)-malate + NAD(+) = oxaloacetate + NADH + H(+). Functionally, catalyzes the reversible oxidation of malate to oxaloacetate. This chain is Malate dehydrogenase, found in Rickettsia typhi (strain ATCC VR-144 / Wilmington).